Reading from the N-terminus, the 105-residue chain is UPF0145 protein LPC_0273 (105 aa).

It belongs to the UPF0145 family.

The sequence is that of UPF0145 protein LPC_0273 from Legionella pneumophila (strain Corby).